The chain runs to 150 residues: Large ribosomal subunit protein uL13 (150 aa).

It belongs to the universal ribosomal protein uL13 family. Part of the 50S ribosomal subunit.

Functionally, this protein is one of the early assembly proteins of the 50S ribosomal subunit, although it is not seen to bind rRNA by itself. It is important during the early stages of 50S assembly. In Sulfurihydrogenibium sp. (strain YO3AOP1), this protein is Large ribosomal subunit protein uL13.